Reading from the N-terminus, the 226-residue chain is 7-cyano-7-deazaguanine synthase (226 aa).

Residue 7–17 (ISGGMDSLVVA) coordinates ATP. C187, C195, C198, and C201 together coordinate Zn(2+).

This sequence belongs to the QueC family. It depends on Zn(2+) as a cofactor.

It catalyses the reaction 7-carboxy-7-deazaguanine + NH4(+) + ATP = 7-cyano-7-deazaguanine + ADP + phosphate + H2O + H(+). It participates in purine metabolism; 7-cyano-7-deazaguanine biosynthesis. Functionally, catalyzes the ATP-dependent conversion of 7-carboxy-7-deazaguanine (CDG) to 7-cyano-7-deazaguanine (preQ(0)). In Chlorobium phaeobacteroides (strain BS1), this protein is 7-cyano-7-deazaguanine synthase.